A 146-amino-acid polypeptide reads, in one-letter code: Holo-[acyl-carrier-protein] synthase (146 aa).

Mg(2+) contacts are provided by Asp8 and Glu61.

It belongs to the P-Pant transferase superfamily. AcpS family. Mg(2+) serves as cofactor.

The protein resides in the cytoplasm. The enzyme catalyses apo-[ACP] + CoA = holo-[ACP] + adenosine 3',5'-bisphosphate + H(+). Its function is as follows. Transfers the 4'-phosphopantetheine moiety from coenzyme A to a Ser of acyl-carrier-protein. This is Holo-[acyl-carrier-protein] synthase from Rhodopseudomonas palustris (strain ATCC BAA-98 / CGA009).